Reading from the N-terminus, the 782-residue chain is Probable cyclic di-GMP phosphodiesterase PdeI (782 aa).

2 helical membrane-spanning segments follow: residues 12–32 (LIIL…IINY) and 286–306 (LFYL…LMTT). The EAL domain occupies 527–781 (NIWIARNIRH…AWDKSGKLVK (255 aa)).

The protein localises to the cell membrane. It catalyses the reaction 3',3'-c-di-GMP + H2O = 5'-phosphoguanylyl(3'-&gt;5')guanosine + H(+). Functionally, phosphodiesterase (PDE) that catalyzes the hydrolysis of cyclic-di-GMP (c-di-GMP) to 5'-pGpG. Overexpression reduces biofilm formation. Cyclic-di-GMP is a second messenger which controls cell surface-associated traits in bacteria. The protein is Probable cyclic di-GMP phosphodiesterase PdeI of Escherichia coli (strain K12).